The primary structure comprises 397 residues: Anhydro-N-acetylmuramic acid kinase (397 aa).

ATP is bound at residue 9–16 (GTSYDAID).

The protein belongs to the anhydro-N-acetylmuramic acid kinase family.

The catalysed reaction is 1,6-anhydro-N-acetyl-beta-muramate + ATP + H2O = N-acetyl-D-muramate 6-phosphate + ADP + H(+). It functions in the pathway amino-sugar metabolism; 1,6-anhydro-N-acetylmuramate degradation. The protein operates within cell wall biogenesis; peptidoglycan recycling. Functionally, catalyzes the specific phosphorylation of 1,6-anhydro-N-acetylmuramic acid (anhMurNAc) with the simultaneous cleavage of the 1,6-anhydro ring, generating MurNAc-6-P. Is required for the utilization of anhMurNAc either imported from the medium or derived from its own cell wall murein, and thus plays a role in cell wall recycling. The chain is Anhydro-N-acetylmuramic acid kinase from Rhodococcus erythropolis (strain PR4 / NBRC 100887).